The sequence spans 717 residues: Catalase-peroxidase (717 aa).

The N-terminal stretch at 1 to 12 is a signal peptide; that stretch reads MTSKGMCPVAHG. A cross-link (tryptophyl-tyrosyl-methioninium (Trp-Tyr) (with M-247)) is located at residues 93–221; sequence WHSAGSYRIA…LAAVMMGLIY (129 aa). His-94 serves as the catalytic Proton acceptor. Residues 221–247 constitute a cross-link (tryptophyl-tyrosyl-methioninium (Tyr-Met) (with W-93)); sequence YVNPEGVDGKPDPLKTAQDMRVTFARM. His-262 is a heme b binding site.

Belongs to the peroxidase family. Peroxidase/catalase subfamily. Homodimer or homotetramer. Heme b serves as cofactor. In terms of processing, formation of the three residue Trp-Tyr-Met cross-link is important for the catalase, but not the peroxidase activity of the enzyme.

It catalyses the reaction H2O2 + AH2 = A + 2 H2O. The catalysed reaction is 2 H2O2 = O2 + 2 H2O. In terms of biological role, bifunctional enzyme with both catalase and broad-spectrum peroxidase activity. This Polynucleobacter asymbioticus (strain DSM 18221 / CIP 109841 / QLW-P1DMWA-1) (Polynucleobacter necessarius subsp. asymbioticus) protein is Catalase-peroxidase.